We begin with the raw amino-acid sequence, 527 residues long: Serine/threonine-protein kinase NLK (527 aa).

2 sufficient for interaction with DAPK3 regions span residues 1 to 125 (MSLC…KAHH) and 124 to 416 (HHHQ…SKRI). 2 required for interaction with TAB2 regions span residues 1 to 304 (MSLC…VVTQ) and 434 to 527 (YHTC…LVWE). Disordered regions lie at residues 22–72 (AAAA…SSAA) and 90–140 (QQPY…DIEP). A compositionally biased stretch (basic residues) spans 26–54 (GHHHHHHHHLPHLPPPHLHHHHHPQHHLH). The span at 103-119 (PGPAAAAPAQVQAAAAA) shows a compositional bias: low complexity. The span at 122–131 (KAHHHQHSHH) shows a compositional bias: basic residues. Positions 138–427 (IEPDRPIGYG…AKDALAHPYL (290 aa)) constitute a Protein kinase domain. ATP-binding positions include 144 to 152 (IGYGAFGVV) and lysine 167. Aspartate 264 acts as the Proton acceptor in catalysis. Threonine 298 carries the phosphothreonine; by autocatalysis modification. The short motif at 298–300 (TQE) is the TQE element. Residues 428–527 (DEGRLRYHTC…EMPPSPLVWE (100 aa)) are required for homodimerization and kinase activation and localization to the nucleus. Serine 522 carries the post-translational modification Phosphoserine.

It belongs to the protein kinase superfamily. CMGC Ser/Thr protein kinase family. MAP kinase subfamily. In terms of assembly, homodimer. Homodimerization is required for intermolecular autophosphorylation, kinase activation and nuclear localization. May interact with components of cullin-RING-based SCF (SKP1-CUL1-F-box protein) E3 ubiquitin-protein ligase complexes. Interacts with LEF1, MEF2A, MYBL1 and MYBL2. Interacts with the upstream activating kinases HIPK2 and MAP3K7/TAK1. Interaction with MAP3K7/TAK1 seems to be indirect, and may be mediated by other proteins such as STAT3, TAB1 and TAB2. Interacts with and phosphorylates a number of transcription factors including FOXO1, FOXO3, FOXO4, MYB, NOTCH1 and TCF7L2/TCF4. Interacts with DAPK3/ZIPK, and this interaction may disrupt interaction with transcription factors such as TCF7L2/TCF4. Interacts with RNF138/NARF. Interacts with ATF5; the interaction stabilizes ATF5 at the protein level in a kinase-independent manner. Mg(2+) serves as cofactor. In terms of processing, phosphorylated on Thr-298. Intermolecular autophosphorylation on Thr-298 activates the enzyme.

The protein resides in the nucleus. The protein localises to the cytoplasm. The catalysed reaction is L-seryl-[protein] + ATP = O-phospho-L-seryl-[protein] + ADP + H(+). The enzyme catalyses L-threonyl-[protein] + ATP = O-phospho-L-threonyl-[protein] + ADP + H(+). With respect to regulation, activated by dimerization and subsequent intermolecular autophosphorylation on Thr-298. Activated by the non-canonical Wnt signaling pathway, in which WNT5A treatment leads to activation of MAP3K7/TAK1 and HIPK2, which subsequently phosphorylates and activates this protein. Other cytokines such as IL6 may also activate this regulatory circuit. Serine/threonine-protein kinase that regulates a number of transcription factors with key roles in cell fate determination. Positive effector of the non-canonical Wnt signaling pathway, acting downstream of WNT5A, MAP3K7/TAK1 and HIPK2. Negative regulator of the canonical Wnt/beta-catenin signaling pathway. Binds to and phosphorylates TCF7L2/TCF4 and LEF1, promoting the dissociation of the TCF7L2/LEF1/beta-catenin complex from DNA, as well as the ubiquitination and subsequent proteolysis of LEF1. Together these effects inhibit the transcriptional activation of canonical Wnt/beta-catenin target genes. Negative regulator of the Notch signaling pathway. Binds to and phosphorylates NOTCH1, thereby preventing the formation of a transcriptionally active ternary complex of NOTCH1, RBPJ/RBPSUH and MAML1. Negative regulator of the MYB family of transcription factors. Phosphorylation of MYB leads to its subsequent proteolysis while phosphorylation of MYBL1 and MYBL2 inhibits their interaction with the coactivator CREBBP. Other transcription factors may also be inhibited by direct phosphorylation of CREBBP itself. Acts downstream of IL6 and MAP3K7/TAK1 to phosphorylate STAT3, which is in turn required for activation of NLK by MAP3K7/TAK1. Upon IL1B stimulus, cooperates with ATF5 to activate the transactivation activity of C/EBP subfamily members. Phosphorylates ATF5 but also stabilizes ATF5 protein levels in a kinase-independent manner. Acts as an inhibitor of the mTORC1 complex in response to osmotic stress by mediating phosphorylation of RPTOR, thereby preventing recruitment of the mTORC1 complex to lysosomes. This Homo sapiens (Human) protein is Serine/threonine-protein kinase NLK (NLK).